The sequence spans 148 residues: Ubiquitin-conjugating enzyme E2 8 (148 aa).

Residues 1-147 (MASKRILKEL…ARNWTQKYAM (147 aa)) form the UBC core domain. Residue Cys85 is the Glycyl thioester intermediate of the active site.

Belongs to the ubiquitin-conjugating enzyme family. As to quaternary structure, interacts with CIP8, CHIP, NLA and XERICO. As to expression, highest expression in young stems, old leaves. Lowest levels in floral buds, anthers and young leaves.

It carries out the reaction S-ubiquitinyl-[E1 ubiquitin-activating enzyme]-L-cysteine + [E2 ubiquitin-conjugating enzyme]-L-cysteine = [E1 ubiquitin-activating enzyme]-L-cysteine + S-ubiquitinyl-[E2 ubiquitin-conjugating enzyme]-L-cysteine.. The protein operates within protein modification; protein ubiquitination. Its function is as follows. Accepts the ubiquitin from the E1 complex and catalyzes its covalent attachment to other proteins. Mediates the selective degradation of short-lived and abnormal proteins. The sequence is that of Ubiquitin-conjugating enzyme E2 8 (UBC8) from Arabidopsis thaliana (Mouse-ear cress).